We begin with the raw amino-acid sequence, 79 residues long: Serine rich endogenous peptide 2 (79 aa).

The N-terminal stretch at 1–19 (MANNLGLVILLLVIVLVSC) is a signal peptide. Positions 25-79 (CALASPQKSRPSSEWRRKLIPVRSSRSPRSPSFAPKKPPPPPPSPPLSPSSPPSN) are disordered. The SCOOP motif signature appears at 45–57 (PVRSSRSPRSPSF). A compositionally biased stretch (low complexity) spans 45 to 59 (PVRSSRSPRSPSFAP). Residues 49–51 (SRS) carry the SxS motif essential for MIK2 binding motif. Positions 60-79 (KKPPPPPPSPPLSPSSPPSN) are enriched in pro residues.

Belongs to the serine rich endogenous peptide (SCOOP) phytocytokine family. As to quaternary structure, interacts with MIK2 (via extracellular leucine-rich repeat domain); this interaction triggers the formation of complex between MIK2 and the BAK1/SERK3 and SERK4 coreceptors, and subsequent BAK1 activation by phosphorylation.

The protein resides in the cell membrane. Its subcellular location is the secreted. It localises to the extracellular space. It is found in the apoplast. Its function is as follows. Brassicaceae-specific phytocytokine (plant endogenous peptide released into the apoplast) perceived by MIK2 in a BAK1/SERK3 and SERK4 coreceptors-dependent manner, that modulates various physiological and antimicrobial processes including growth prevention and reactive oxygen species (ROS) response regulation. The polypeptide is Serine rich endogenous peptide 2 (Arabidopsis thaliana (Mouse-ear cress)).